Consider the following 233-residue polypeptide: MAKLSKKQVSARAAFAGKSNLAVEEAVKLVKENASAKFDETVEIAMNLGVDPRHADQMVRGVVTLPNGTGKDVRVAVFARGPKADEAKAAGAEIVGAEDLMETIQSGKIEFDRCIATPDMMPLVGRLGKILGPRNLMPNPKVGTVTMDVKAAVEAAKGGEVQFKAEKAGVVHAGVGKASFEIEKLAENIRAFVDAVNRAKPSGAKGTYVKKVSISSTMGPGVSLDLGSTAAAQ.

Belongs to the universal ribosomal protein uL1 family. As to quaternary structure, part of the 50S ribosomal subunit.

In terms of biological role, binds directly to 23S rRNA. The L1 stalk is quite mobile in the ribosome, and is involved in E site tRNA release. Protein L1 is also a translational repressor protein, it controls the translation of the L11 operon by binding to its mRNA. This is Large ribosomal subunit protein uL1 from Paracoccus denitrificans (strain Pd 1222).